The sequence spans 331 residues: Ketol-acid reductoisomerase (NADP(+)) (331 aa).

The KARI N-terminal Rossmann domain maps to 2 to 182 (AKIYTDKDAS…GATRAGVIET (181 aa)). NADP(+)-binding positions include 25–28 (YGIQ), Arg-48, Ser-53, and 83–86 (DMEQ). His-108 is an active-site residue. NADP(+) is bound at residue Gly-134. The KARI C-terminal knotted domain maps to 183 to 328 (TFAEETETDL…AEMRKLLFGR (146 aa)). Mg(2+) contacts are provided by Asp-191, Glu-195, Glu-227, and Glu-231. A substrate-binding site is contributed by Ser-252.

It belongs to the ketol-acid reductoisomerase family. Mg(2+) is required as a cofactor.

It carries out the reaction (2R)-2,3-dihydroxy-3-methylbutanoate + NADP(+) = (2S)-2-acetolactate + NADPH + H(+). The catalysed reaction is (2R,3R)-2,3-dihydroxy-3-methylpentanoate + NADP(+) = (S)-2-ethyl-2-hydroxy-3-oxobutanoate + NADPH + H(+). Its pathway is amino-acid biosynthesis; L-isoleucine biosynthesis; L-isoleucine from 2-oxobutanoate: step 2/4. The protein operates within amino-acid biosynthesis; L-valine biosynthesis; L-valine from pyruvate: step 2/4. Its function is as follows. Involved in the biosynthesis of branched-chain amino acids (BCAA). Catalyzes an alkyl-migration followed by a ketol-acid reduction of (S)-2-acetolactate (S2AL) to yield (R)-2,3-dihydroxy-isovalerate. In the isomerase reaction, S2AL is rearranged via a Mg-dependent methyl migration to produce 3-hydroxy-3-methyl-2-ketobutyrate (HMKB). In the reductase reaction, this 2-ketoacid undergoes a metal-dependent reduction by NADPH to yield (R)-2,3-dihydroxy-isovalerate. This chain is Ketol-acid reductoisomerase (NADP(+)), found in Pyrobaculum islandicum (strain DSM 4184 / JCM 9189 / GEO3).